The chain runs to 380 residues: Erythronate-4-phosphate dehydrogenase (380 aa).

2 residues coordinate substrate: Ser-45 and Thr-66. Residues 126–127 (QV), Asp-146, Thr-174, 205–207 (ASR), and Asp-231 contribute to the NAD(+) site. Arg-207 is a catalytic residue. Glu-236 is a catalytic residue. Catalysis depends on His-253, which acts as the Proton donor. Gly-256 is an NAD(+) binding site. Tyr-257 lines the substrate pocket.

This sequence belongs to the D-isomer specific 2-hydroxyacid dehydrogenase family. PdxB subfamily. Homodimer.

It localises to the cytoplasm. It carries out the reaction 4-phospho-D-erythronate + NAD(+) = (R)-3-hydroxy-2-oxo-4-phosphooxybutanoate + NADH + H(+). It participates in cofactor biosynthesis; pyridoxine 5'-phosphate biosynthesis; pyridoxine 5'-phosphate from D-erythrose 4-phosphate: step 2/5. In terms of biological role, catalyzes the oxidation of erythronate-4-phosphate to 3-hydroxy-2-oxo-4-phosphonooxybutanoate. The chain is Erythronate-4-phosphate dehydrogenase from Pseudomonas syringae pv. tomato (strain ATCC BAA-871 / DC3000).